The primary structure comprises 152 residues: Large ribosomal subunit protein uL15 (152 aa).

A disordered region spans residues 1–57 (MTSTLNTLKSNSGSRKKKLRKGRGIAAGQGASCGFGMRGQKSRSGRPTRPGFEGGQM). Residues 14-23 (SRKKKLRKGR) are compositionally biased toward basic residues. Residues 25–37 (IAAGQGASCGFGM) are compositionally biased toward gly residues.

This sequence belongs to the universal ribosomal protein uL15 family. As to quaternary structure, part of the 50S ribosomal subunit.

Binds to the 23S rRNA. The sequence is that of Large ribosomal subunit protein uL15 from Prochlorococcus marinus (strain MIT 9312).